A 91-amino-acid chain; its full sequence is Small ribosomal subunit protein uS19 (91 aa).

Belongs to the universal ribosomal protein uS19 family.

Functionally, protein S19 forms a complex with S13 that binds strongly to the 16S ribosomal RNA. This chain is Small ribosomal subunit protein uS19, found in Synechococcus sp. (strain CC9605).